We begin with the raw amino-acid sequence, 172 residues long: MKEEKKLLLREVEEKITASQGFILLRYLGFTAAHSRSFRNNLSGVSAEFEVLKKKIFFKALETSGVEMDPEDGEGHLGVVFAYGDPVSAAKQVLDFNKQHNDSLVFLAGRIDNASLSGREVEAVAKLPSMKELRQQVVGLIAAPMSQVAGIMNSVLSGVISCVDQKAEKTQE.

The protein belongs to the universal ribosomal protein uL10 family. As to quaternary structure, part of the ribosomal stalk of the 50S ribosomal subunit. The N-terminus interacts with L11 and the large rRNA to form the base of the stalk. The C-terminus forms an elongated spine to which L12 dimers bind in a sequential fashion forming a multimeric L10(L12)X complex.

Its function is as follows. Forms part of the ribosomal stalk, playing a central role in the interaction of the ribosome with GTP-bound translation factors. The protein is Large ribosomal subunit protein uL10 of Chlamydia trachomatis serovar A (strain ATCC VR-571B / DSM 19440 / HAR-13).